Reading from the N-terminus, the 353-residue chain is Phosphate acyltransferase (353 aa).

This sequence belongs to the PlsX family. Homodimer. Probably interacts with PlsY.

The protein resides in the cytoplasm. It carries out the reaction a fatty acyl-[ACP] + phosphate = an acyl phosphate + holo-[ACP]. It functions in the pathway lipid metabolism; phospholipid metabolism. In terms of biological role, catalyzes the reversible formation of acyl-phosphate (acyl-PO(4)) from acyl-[acyl-carrier-protein] (acyl-ACP). This enzyme utilizes acyl-ACP as fatty acyl donor, but not acyl-CoA. This Rhodopseudomonas palustris (strain BisB5) protein is Phosphate acyltransferase.